A 306-amino-acid chain; its full sequence is Putative syntaxin-131 (306 aa).

Met1 carries the post-translational modification N-acetylmethionine. Residues 1 to 276 are Cytoplasmic-facing; that stretch reads MNDLLKGSLE…AVKSQKSSRK (276 aa). The span at 11-23 shows a compositional bias: basic and acidic residues; sequence FSRDRSNRSDIES. A disordered region spans residues 11–35; it reads FSRDRSNRSDIESGHGPGNSGDLGL. 2 coiled-coil regions span residues 35–72 and 134–162; these read LSGF…VTKA and KKKF…VERR. In terms of domain architecture, t-SNARE coiled-coil homology spans 205–267; sequence LAEIQERHDA…QSGNNQLTKA (63 aa). A helical; Anchor for type IV membrane protein transmembrane segment spans residues 277–297; sequence WMCIAILILLIIIIITVISVL. Residues 298–306 are Vesicular-facing; it reads KPWTQKNGA.

Belongs to the syntaxin family. In terms of assembly, part of the t-SNARE complex.

It is found in the membrane. Functionally, vesicle trafficking protein that functions in the secretory pathway. The polypeptide is Putative syntaxin-131 (SYP131) (Arabidopsis thaliana (Mouse-ear cress)).